Here is a 347-residue protein sequence, read N- to C-terminus: Histidinol-phosphate aminotransferase (347 aa).

Lysine 209 bears the N6-(pyridoxal phosphate)lysine mark.

The protein belongs to the class-II pyridoxal-phosphate-dependent aminotransferase family. Histidinol-phosphate aminotransferase subfamily. Homodimer. It depends on pyridoxal 5'-phosphate as a cofactor.

The enzyme catalyses L-histidinol phosphate + 2-oxoglutarate = 3-(imidazol-4-yl)-2-oxopropyl phosphate + L-glutamate. It functions in the pathway amino-acid biosynthesis; L-histidine biosynthesis; L-histidine from 5-phospho-alpha-D-ribose 1-diphosphate: step 7/9. This Geotalea daltonii (strain DSM 22248 / JCM 15807 / FRC-32) (Geobacter daltonii) protein is Histidinol-phosphate aminotransferase.